Reading from the N-terminus, the 197-residue chain is Adenylylsulfatase HINT3 (197 aa).

The segment at 14 to 43 is disordered; sequence NPPGPNPTRDPTLRVSDCSSGSSGDGKVES. Residues 51-158 enclose the HIT domain; that stretch reads VFCKIIRGES…IPRKERDCLW (108 aa). A Histidine triad motif motif is present at residues 143-147; the sequence is HTHIH. Histidine 145 (tele-AMP-histidine intermediate) is an active-site residue. Histidine 147 lines the substrate pocket.

Its subcellular location is the peroxisome. The enzyme catalyses adenosine 5'-phosphosulfate + H2O = sulfate + AMP + 2 H(+). Functionally, possesses adenylylsulfatase activity in vitro. This Arabidopsis thaliana (Mouse-ear cress) protein is Adenylylsulfatase HINT3.